A 275-amino-acid chain; its full sequence is Ribosomal RNA small subunit methyltransferase A (275 aa).

Residues Asn-28, Leu-30, Gly-55, Glu-77, Asp-103, and Asn-123 each contribute to the S-adenosyl-L-methionine site.

It belongs to the class I-like SAM-binding methyltransferase superfamily. rRNA adenine N(6)-methyltransferase family. RsmA subfamily.

The protein resides in the cytoplasm. It carries out the reaction adenosine(1518)/adenosine(1519) in 16S rRNA + 4 S-adenosyl-L-methionine = N(6)-dimethyladenosine(1518)/N(6)-dimethyladenosine(1519) in 16S rRNA + 4 S-adenosyl-L-homocysteine + 4 H(+). Its function is as follows. Specifically dimethylates two adjacent adenosines (A1518 and A1519) in the loop of a conserved hairpin near the 3'-end of 16S rRNA in the 30S particle. May play a critical role in biogenesis of 30S subunits. This chain is Ribosomal RNA small subunit methyltransferase A, found in Allorhizobium ampelinum (strain ATCC BAA-846 / DSM 112012 / S4) (Agrobacterium vitis (strain S4)).